A 104-amino-acid chain; its full sequence is Flagellar hook-basal body complex protein FliE (104 aa).

Belongs to the FliE family.

Its subcellular location is the bacterial flagellum basal body. This chain is Flagellar hook-basal body complex protein FliE, found in Enterobacter sp. (strain 638).